A 217-amino-acid chain; its full sequence is Adenylate kinase (217 aa).

10-15 contributes to the ATP binding site; it reads GAGKGT. An NMP region spans residues 30 to 59; sequence STGDMFRAAMKEETPLGLEAKSYIDKGELV. Residues Thr-31, Arg-36, 57–59, 85–88, and Gln-92 each bind AMP; these read ELV and GFPR. The tract at residues 126-163 is LID; that stretch reads GRRICSVCGTTYHLVFNPPKTPGICDKDGGELYQRADD. Arg-127 is an ATP binding site. Residues Cys-130 and Cys-133 each coordinate Zn(2+). 136 to 137 lines the ATP pocket; it reads TY. Residues Cys-150 and Asp-153 each coordinate Zn(2+). AMP contacts are provided by Arg-160 and Arg-171. Gln-199 serves as a coordination point for ATP.

This sequence belongs to the adenylate kinase family. Monomer.

It is found in the cytoplasm. The catalysed reaction is AMP + ATP = 2 ADP. The protein operates within purine metabolism; AMP biosynthesis via salvage pathway; AMP from ADP: step 1/1. Catalyzes the reversible transfer of the terminal phosphate group between ATP and AMP. Plays an important role in cellular energy homeostasis and in adenine nucleotide metabolism. The polypeptide is Adenylate kinase (Bacillus subtilis (strain 168)).